The sequence spans 1361 residues: Zinc finger protein GLI4 (1361 aa).

The disordered stretch occupies residues 185–270 (SSFGHTPLLH…PQPPDHLTDL (86 aa)). Polar residues-rich tracts occupy residues 198-208 (TFASRQQGALT) and 227-241 (NKVSSESAVSSTVNQ). C2H2-type zinc fingers lie at residues 289 to 314 (TNCHWDGCSKEFDTQDQLVHHINNDH), 322 to 349 (FVCRWQDCSREQKPFKAQYMLVVHMRRH), 355 to 379 (HKCTFEGCFKAYSRLENLKTHLRSH), 385 to 410 (YVCDHEGCNKAFSNASDRAKHQNRTH), and 416 to 441 (YICKVPGCTKRYTDPSSLRKHVKTVH). Disordered stretches follow at residues 434-527 (RKHV…TNNI), 556-584 (STVSSWQRSGRPATPETQRIHSAETGTAE), 647-720 (NERR…LPNL), 787-832 (NAGL…SMNS), 906-946 (QNRE…APGA), and 1134-1230 (DGLH…PKDN). Over residues 475-502 (SGREHSDSVSRDQEHCLQTRTIKTEDNM) the composition is skewed to basic and acidic residues. Residues 506-522 (SSPGGQSSCSSEPSPYG) are compositionally biased toward low complexity. Residues 573-584 (QRIHSAETGTAE) show a composition bias toward basic and acidic residues. Residues 653-670 (TSSTLSSAYTSRRSSGIS) show a composition bias toward low complexity. 2 stretches are compositionally biased toward polar residues: residues 672 to 695 (YFSSRRSSETSQFGGRLNNSSSAD) and 710 to 720 (EASQHSGLPNL). Over residues 805–821 (RASDPVRRTAGIDDKPL) the composition is skewed to basic and acidic residues. Composition is skewed to polar residues over residues 913–939 (QNLQTEYSSPARNLQSNTKSFHNNTPE) and 1142–1164 (YTVQPQKNGLEPQQNTLGMSGQA). Pro residues predominate over residues 1172–1183 (PRPPAAPHPPNR).

The protein belongs to the GLI C2H2-type zinc-finger protein family.

The protein localises to the nucleus. In terms of biological role, has an essential role in the early embryonic patterning of mesoderm and neuroectoderm. In Xenopus laevis (African clawed frog), this protein is Zinc finger protein GLI4 (gli4).